Here is a 223-residue protein sequence, read N- to C-terminus: ATP synthase subunit a 1 (223 aa).

A run of 5 helical transmembrane segments spans residues 20-40, 78-98, 108-128, 174-194, and 196-216; these read LTIATTWALMLVLVGGSAFAS, YLPYLGTLFIFIAFSNLCTII, LSTTAALAMSVFVAVPLFGIA, MILAILLTVTPFVFPVLMSVL, and LLTGMVQAYIFSILATVYISA.

This sequence belongs to the ATPase A chain family. As to quaternary structure, F-type ATPases have 2 components, CF(1) - the catalytic core - and CF(0) - the membrane proton channel. CF(1) has five subunits: alpha(3), beta(3), gamma(1), delta(1), epsilon(1). CF(0) has four main subunits: a, b, b' and c.

The protein localises to the cell inner membrane. Functionally, key component of the proton channel; it plays a direct role in the translocation of protons across the membrane. This Chlorobium luteolum (strain DSM 273 / BCRC 81028 / 2530) (Pelodictyon luteolum) protein is ATP synthase subunit a 1.